The primary structure comprises 357 residues: MKPSQKQTQRQPHFSKDSAKKRDFSAKNDRRSVSRTARIETANTKKSAVNSDNKFLSKPKAKPVVRASNQPKAEGEKLQKVLARAGQGSRREIETMIAAGRVSVEGKIATLGDRIDVHSGVKVRIDGQIINLSHTQKEICRVLMYYKPEGELCTRSDPEGRATVFDRLPRLTGSRWIAVGRLDINTSGLLLFTTDGELANRLMHPSREVEREYSVRVFGQVDDAMLARLRKGVQLEDGLANFKEIKFTGGVGINQWYDVTLMEGRNREVRRLWESQGIQVSRLIRIRYGNIKLMKGLPRGGWEEMDLENVNYLRELVGLPAETETKLDVKQASRRPKSGQIRKAVKRYSEMNKRYKK.

Polar residues predominate over residues 1–12; the sequence is MKPSQKQTQRQP. The interval 1-76 is disordered; sequence MKPSQKQTQR…ASNQPKAEGE (76 aa). Basic and acidic residues predominate over residues 14-32; that stretch reads FSKDSAKKRDFSAKNDRRS. Polar residues predominate over residues 41-54; that stretch reads TANTKKSAVNSDNK. The S4 RNA-binding domain maps to 76–148; it reads EKLQKVLARA…ICRVLMYYKP (73 aa). D183 serves as the catalytic Nucleophile.

Belongs to the pseudouridine synthase RsuA family.

The catalysed reaction is uridine(2605) in 23S rRNA = pseudouridine(2605) in 23S rRNA. Functionally, responsible for synthesis of pseudouridine from uracil-2605 in 23S ribosomal RNA. The protein is Ribosomal large subunit pseudouridine synthase B (rluB) of Haemophilus influenzae (strain ATCC 51907 / DSM 11121 / KW20 / Rd).